The chain runs to 322 residues: Phosphatidylserine decarboxylase proenzyme (322 aa).

Residues D90, H147, and S254 each act as charge relay system; for autoendoproteolytic cleavage activity in the active site. S254 acts as the Schiff-base intermediate with substrate; via pyruvic acid; for decarboxylase activity in catalysis. S254 is subject to Pyruvic acid (Ser); by autocatalysis. The tract at residues 296–322 (EPAPLPAEEIKAEHDASPLVDNKKDDT) is disordered. A compositionally biased stretch (basic and acidic residues) spans 303–322 (EEIKAEHDASPLVDNKKDDT).

The protein belongs to the phosphatidylserine decarboxylase family. PSD-B subfamily. Prokaryotic type I sub-subfamily. As to quaternary structure, heterodimer of a large membrane-associated beta subunit and a small pyruvoyl-containing alpha subunit. Pyruvate serves as cofactor. Post-translationally, is synthesized initially as an inactive proenzyme. Formation of the active enzyme involves a self-maturation process in which the active site pyruvoyl group is generated from an internal serine residue via an autocatalytic post-translational modification. Two non-identical subunits are generated from the proenzyme in this reaction, and the pyruvate is formed at the N-terminus of the alpha chain, which is derived from the carboxyl end of the proenzyme. The autoendoproteolytic cleavage occurs by a canonical serine protease mechanism, in which the side chain hydroxyl group of the serine supplies its oxygen atom to form the C-terminus of the beta chain, while the remainder of the serine residue undergoes an oxidative deamination to produce ammonia and the pyruvoyl prosthetic group on the alpha chain. During this reaction, the Ser that is part of the protease active site of the proenzyme becomes the pyruvoyl prosthetic group, which constitutes an essential element of the active site of the mature decarboxylase.

The protein localises to the cell membrane. It catalyses the reaction a 1,2-diacyl-sn-glycero-3-phospho-L-serine + H(+) = a 1,2-diacyl-sn-glycero-3-phosphoethanolamine + CO2. It participates in phospholipid metabolism; phosphatidylethanolamine biosynthesis; phosphatidylethanolamine from CDP-diacylglycerol: step 2/2. Its function is as follows. Catalyzes the formation of phosphatidylethanolamine (PtdEtn) from phosphatidylserine (PtdSer). The protein is Phosphatidylserine decarboxylase proenzyme of Salmonella dublin (strain CT_02021853).